Here is a 491-residue protein sequence, read N- to C-terminus: Anthranilate synthase component 1 (491 aa).

Residues S49 and 271–273 each bind L-tryptophan; that span reads PYL. 306-307 contributes to the chorismate binding site; it reads GT. E333 lines the Mg(2+) pocket. Residues Y421, R441, 455-457, and G457 contribute to the chorismate site; that span reads GAG. Position 470 (E470) interacts with Mg(2+).

It belongs to the anthranilate synthase component I family. Heterotetramer consisting of two non-identical subunits: a beta subunit (TrpG) and a large alpha subunit (TrpE). Mg(2+) serves as cofactor.

The enzyme catalyses chorismate + L-glutamine = anthranilate + pyruvate + L-glutamate + H(+). Its pathway is amino-acid biosynthesis; L-tryptophan biosynthesis; L-tryptophan from chorismate: step 1/5. Its activity is regulated as follows. Feedback inhibited by tryptophan. Functionally, part of a heterotetrameric complex that catalyzes the two-step biosynthesis of anthranilate, an intermediate in the biosynthesis of L-tryptophan. In the first step, the glutamine-binding beta subunit (TrpG) of anthranilate synthase (AS) provides the glutamine amidotransferase activity which generates ammonia as a substrate that, along with chorismate, is used in the second step, catalyzed by the large alpha subunit of AS (TrpE) to produce anthranilate. In the absence of TrpG, TrpE can synthesize anthranilate directly from chorismate and high concentrations of ammonia. In Neisseria meningitidis serogroup C / serotype 2a (strain ATCC 700532 / DSM 15464 / FAM18), this protein is Anthranilate synthase component 1 (trpE).